The primary structure comprises 215 residues: Cytochrome c biogenesis ATP-binding export protein CcmA (215 aa).

Residues 3 to 211 (LTAENLAARR…KMTGFAGVDR (209 aa)) form the ABC transporter domain. Residue 35–42 (GRNGSGKS) participates in ATP binding.

This sequence belongs to the ABC transporter superfamily. CcmA exporter (TC 3.A.1.107) family. The complex is composed of two ATP-binding proteins (CcmA) and two transmembrane proteins (CcmB).

The protein resides in the cell inner membrane. The enzyme catalyses heme b(in) + ATP + H2O = heme b(out) + ADP + phosphate + H(+). Functionally, part of the ABC transporter complex CcmAB involved in the biogenesis of c-type cytochromes; once thought to export heme, this seems not to be the case, but its exact role is uncertain. Responsible for energy coupling to the transport system. This Rhizobium etli (strain ATCC 51251 / DSM 11541 / JCM 21823 / NBRC 15573 / CFN 42) protein is Cytochrome c biogenesis ATP-binding export protein CcmA.